Reading from the N-terminus, the 258-residue chain is Deoxyribose-phosphate aldolase (258 aa).

The Proton donor/acceptor role is filled by Asp102. Residue Lys165 is the Schiff-base intermediate with acetaldehyde of the active site. The Proton donor/acceptor role is filled by Lys199.

Belongs to the DeoC/FbaB aldolase family. DeoC type 2 subfamily.

The protein resides in the cytoplasm. The enzyme catalyses 2-deoxy-D-ribose 5-phosphate = D-glyceraldehyde 3-phosphate + acetaldehyde. It functions in the pathway carbohydrate degradation; 2-deoxy-D-ribose 1-phosphate degradation; D-glyceraldehyde 3-phosphate and acetaldehyde from 2-deoxy-alpha-D-ribose 1-phosphate: step 2/2. In terms of biological role, catalyzes a reversible aldol reaction between acetaldehyde and D-glyceraldehyde 3-phosphate to generate 2-deoxy-D-ribose 5-phosphate. The polypeptide is Deoxyribose-phosphate aldolase (Aliivibrio fischeri (strain ATCC 700601 / ES114) (Vibrio fischeri)).